The chain runs to 2602 residues: Non-reducing polyketide synthase SAT8 (2602 aa).

Catalysis depends on cysteine 130, which acts as the Nucleophile; for transacylase activity. The Proton donor/acceptor; for transacylase activity role is filled by histidine 249. Residues 379–398 are disordered; it reads MLENSTSPPSPAATSSNSHC. The segment covering 382-396 has biased composition (low complexity); that stretch reads NSTSPPSPAATSSNS. Residues 404–822 form the Ketosynthase family 3 (KS3) domain; sequence PRDIAIVGMS…GSNAAMVVTQ (419 aa). Active-site for beta-ketoacyl synthase activity residues include cysteine 571, histidine 706, and histidine 745. A malonyl-CoA:ACP transacylase (MAT) region spans residues 926 to 1216; it reads FGGQMSTFVG…AMARRSLDSN (291 aa). The interval 1298–1442 is N-terminal hotdog fold; sequence GPLFGLLTFV…GKLDLLSSSE (145 aa). A PKS/mFAS DH domain is found at 1298–1618; it reads GPLFGLLTFV…YTRIPRHSMT (321 aa). A product template (PT) domain region spans residues 1331-1616; the sequence is LVIPHIIART…IAYTRIPRHS (286 aa). Histidine 1335 (proton acceptor; for dehydratase activity) is an active-site residue. The tract at residues 1467 to 1618 is C-terminal hotdog fold; sequence GDVSGLQGRS…YTRIPRHSMT (152 aa). Catalysis depends on aspartate 1524, which acts as the Proton donor; for dehydratase activity. Residues 1658 to 1733 form the Carrier domain; sequence DTLKQTVGQI…AFVRYISKVV (76 aa). Serine 1692 is modified (O-(pantetheine 4'-phosphoryl)serine). Residues 1737–1772 form a disordered region; the sequence is DDLGTPSHSDNDSHVTGTTATPNSSSASSDTHHGNS. The span at 1752-1765 shows a compositional bias: low complexity; sequence TGTTATPNSSSASS. A methyltransferase domain region spans residues 1979–2150; it reads VEKVKDDFQG…GYGHVDWTDG (172 aa). Residues 2229–2530 form an NADPH-binding domain region; the sequence is IVVVTGATGS…IPLGEWVRKV (302 aa).

Requires pantetheine 4'-phosphate as cofactor.

It participates in mycotoxin biosynthesis. Its function is as follows. Non-reducing polyketide synthase; part of the satratoxin SC1 cluster involved in the biosynthesis of satratoxins, trichothecene mycotoxins that are associated with human food poisonings. Satratoxins are suggested to be made by products of multiple gene clusters (SC1, SC2 and SC3) that encode 21 proteins in all, including polyketide synthases, acetyltransferases, and other enzymes expected to modify the trichothecene skeleton. SC1 encodes 10 proteins, SAT1 to SAT10. The largest are SAT8, which encodes a putative polyketide synthase (PKS) with a conventional non-reducing architecture, and SAT10, a putative protein containing four ankyrin repeats and thus may be involved in protein scaffolding. The putative short-chain reductase SAT3 may assist the PKS in some capacity. SAT6 contains a secretory lipase domain and acts probably as a trichothecene esterase. SAT5 encodes a putative acetyltransferase, and so, with SAT6, may affect endogenous protection from toxicity. The probable transcription factor SAT9 may regulate the expression of the SC1 cluster. SC2 encodes proteins SAT11 to SAT16, the largest of which encodes the putative reducing PKS SAT13. SAT11 is a cytochrome P450 monooxygenase, while SAT14 and SAT16 are probable acetyltransferases. The SC2 cluster may be regulated by the transcription factor SAT15. SC3 is a small cluster that encodes 5 proteins, SAT17 to SAT21. SAT21 is a putative MFS-type transporter which may have a role in exporting secondary metabolites. The four other proteins putatively encoded in SC3 include the taurine hydroxylase-like protein SAT17, the O-methyltransferase SAT18, the acetyltransferase SAT19, and the Cys6-type zinc finger SAT20, the latter being probably involved in regulation of SC3 expression. In Stachybotrys chartarum (strain CBS 109288 / IBT 7711) (Toxic black mold), this protein is Non-reducing polyketide synthase SAT8.